The following is a 252-amino-acid chain: 2-succinyl-6-hydroxy-2,4-cyclohexadiene-1-carboxylate synthase (252 aa).

It belongs to the AB hydrolase superfamily. MenH family. Monomer.

The catalysed reaction is 5-enolpyruvoyl-6-hydroxy-2-succinyl-cyclohex-3-ene-1-carboxylate = (1R,6R)-6-hydroxy-2-succinyl-cyclohexa-2,4-diene-1-carboxylate + pyruvate. It participates in quinol/quinone metabolism; 1,4-dihydroxy-2-naphthoate biosynthesis; 1,4-dihydroxy-2-naphthoate from chorismate: step 3/7. Its pathway is quinol/quinone metabolism; menaquinone biosynthesis. Functionally, catalyzes a proton abstraction reaction that results in 2,5-elimination of pyruvate from 2-succinyl-5-enolpyruvyl-6-hydroxy-3-cyclohexene-1-carboxylate (SEPHCHC) and the formation of 2-succinyl-6-hydroxy-2,4-cyclohexadiene-1-carboxylate (SHCHC). The chain is 2-succinyl-6-hydroxy-2,4-cyclohexadiene-1-carboxylate synthase from Klebsiella pneumoniae (strain 342).